A 588-amino-acid chain; its full sequence is 3-methylmercaptopropionyl-CoA dehydrogenase (588 aa).

Glu435 acts as the Proton acceptor in catalysis.

The protein belongs to the acyl-CoA dehydrogenase family. The cofactor is FAD.

It catalyses the reaction 3-(methylsulfanyl)propanoyl-CoA + oxidized [electron-transfer flavoprotein] + H(+) = 3-(methylsulfanyl)acryloyl-CoA + reduced [electron-transfer flavoprotein]. Involved in the assimilation of dimethylsulphoniopropionate (DMSP), an important compound in the fixation of carbon in marine phytoplankton, by mediating the conversion of 3-(methylthio)propanoyl-CoA (MMPA-CoA) to 3-(methylthio)acryloyl-CoA (MTA-CoA). This is 3-methylmercaptopropionyl-CoA dehydrogenase from Ruegeria pomeroyi (strain ATCC 700808 / DSM 15171 / DSS-3) (Silicibacter pomeroyi).